Reading from the N-terminus, the 202-residue chain is Peptidyl-tRNA hydrolase (202 aa).

Y16 contacts tRNA. H21 serves as the catalytic Proton acceptor. Positions 68, 70, and 116 each coordinate tRNA.

Belongs to the PTH family. In terms of assembly, monomer.

Its subcellular location is the cytoplasm. The catalysed reaction is an N-acyl-L-alpha-aminoacyl-tRNA + H2O = an N-acyl-L-amino acid + a tRNA + H(+). In terms of biological role, hydrolyzes ribosome-free peptidyl-tRNAs (with 1 or more amino acids incorporated), which drop off the ribosome during protein synthesis, or as a result of ribosome stalling. Its function is as follows. Catalyzes the release of premature peptidyl moieties from peptidyl-tRNA molecules trapped in stalled 50S ribosomal subunits, and thus maintains levels of free tRNAs and 50S ribosomes. The chain is Peptidyl-tRNA hydrolase from Treponema pallidum (strain Nichols).